The chain runs to 153 residues: Calmodulin-like protein 4 (153 aa).

4 EF-hand domains span residues 8 to 43 (DAIQKFKECFSLYDKKGKGKIPAGDLLTVMRCLGTC), 44 to 79 (PTPGEVTRHLQVHKIGKDGEVDFSTFLTIMYRQQKQ), 81 to 116 (DPENEIMVAMLMSDKQKKGVIPLKELRAKLTQMGEK), and 117 to 152 (LTPEEVDDLLKGVKVGPDGMVKYEEFVRQITLPVPD).

This sequence belongs to the calmodulin family. In terms of assembly, associates with the IMAC/intermicrovillar adhesion complex.

The protein resides in the cell projection. It localises to the microvillus. In terms of biological role, as part of the intermicrovillar adhesion complex/IMAC plays a role in epithelial brush border differentiation, controlling microvilli organization and length. Acts as a light chain for MYO7B and is required for efficient targeting of the IMAC to the tips of border brush microvilli. The sequence is that of Calmodulin-like protein 4 (calml4) from Xenopus tropicalis (Western clawed frog).